Consider the following 45-residue polypeptide: Omega-hexatoxin-Hv2a (45 aa).

3 cysteine pairs are disulfide-bonded: C4–C18, C11–C24, and C17–C29.

Belongs to the neurotoxin 15 family. 02 (omega-actx) subfamily. Expressed by the venom gland.

Its subcellular location is the secreted. Its function is as follows. Potent inhibitor of insect (bee brain), but not mammalian (rat trigeminal neurons), voltage-gated calcium channels (Cav). In vivo, injection into lone star ticks (Amblyomma americanum) induces curling of all eight legs into closed loops, followed by death. This chain is Omega-hexatoxin-Hv2a, found in Hadronyche versuta (Blue mountains funnel-web spider).